Reading from the N-terminus, the 361-residue chain is MKDSIKAKLQSLIERHEEVSALLSEAGIISDQNKFRDLSKEYSHLEPIVKAFKEYTQALEDKQAAYEMLNEKDAELVEMAKEELKLANEAIEKLESELQIFLLPRDPNDDANVFLEIRAGTGGDEASIFSGDLFKMYSKYAEQRGWKIEVISASEGEHGGYKEIISRIYGDGVYSQLKFESGAHRVQRVPATESQGRIHTSACTVAVMPEADEVEGIDINPADIKVDTFRASGAGGQHVNKTDSAIRITHIPTGVVVECQDQRSQHKNRAAAMSMLKSKLLQAEIDKQQKEQSDTRKSLVGSGDRSERIRTYNYPQGRVTDHRINLTLYKLDEVMEGSLDSIIQPLVLEHQADLLATMSDE.

N5-methylglutamine is present on Q237. A compositionally biased stretch (basic and acidic residues) spans 287–297 (KQQKEQSDTRK). Positions 287–313 (KQQKEQSDTRKSLVGSGDRSERIRTYN) are disordered.

This sequence belongs to the prokaryotic/mitochondrial release factor family. In terms of processing, methylated by PrmC. Methylation increases the termination efficiency of RF1.

It is found in the cytoplasm. Peptide chain release factor 1 directs the termination of translation in response to the peptide chain termination codons UAG and UAA. This Francisella tularensis subsp. holarctica (strain FTNF002-00 / FTA) protein is Peptide chain release factor 1.